Reading from the N-terminus, the 883-residue chain is Alanine--tRNA ligase (883 aa).

Zn(2+)-binding residues include histidine 563, histidine 567, cysteine 677, and histidine 681.

The protein belongs to the class-II aminoacyl-tRNA synthetase family. Zn(2+) is required as a cofactor.

Its subcellular location is the cytoplasm. The enzyme catalyses tRNA(Ala) + L-alanine + ATP = L-alanyl-tRNA(Ala) + AMP + diphosphate. Functionally, catalyzes the attachment of alanine to tRNA(Ala) in a two-step reaction: alanine is first activated by ATP to form Ala-AMP and then transferred to the acceptor end of tRNA(Ala). Also edits incorrectly charged Ser-tRNA(Ala) and Gly-tRNA(Ala) via its editing domain. This chain is Alanine--tRNA ligase, found in Cereibacter sphaeroides (strain ATCC 17029 / ATH 2.4.9) (Rhodobacter sphaeroides).